Reading from the N-terminus, the 415-residue chain is Serine hydroxymethyltransferase (415 aa).

(6S)-5,6,7,8-tetrahydrofolate is bound by residues Leu121 and 125 to 127; that span reads GHL. Residue Lys229 is modified to N6-(pyridoxal phosphate)lysine.

The protein belongs to the SHMT family. Homodimer. Pyridoxal 5'-phosphate is required as a cofactor.

It localises to the cytoplasm. It carries out the reaction (6R)-5,10-methylene-5,6,7,8-tetrahydrofolate + glycine + H2O = (6S)-5,6,7,8-tetrahydrofolate + L-serine. The protein operates within one-carbon metabolism; tetrahydrofolate interconversion. It functions in the pathway amino-acid biosynthesis; glycine biosynthesis; glycine from L-serine: step 1/1. Catalyzes the reversible interconversion of serine and glycine with tetrahydrofolate (THF) serving as the one-carbon carrier. This reaction serves as the major source of one-carbon groups required for the biosynthesis of purines, thymidylate, methionine, and other important biomolecules. Also exhibits THF-independent aldolase activity toward beta-hydroxyamino acids, producing glycine and aldehydes, via a retro-aldol mechanism. In Bordetella petrii (strain ATCC BAA-461 / DSM 12804 / CCUG 43448), this protein is Serine hydroxymethyltransferase.